Consider the following 765-residue polypeptide: Alpha,alpha-trehalose phosphorylase (765 aa).

Position 352-353 (352-353) interacts with substrate; that stretch reads WD. Catalysis depends on E479, which acts as the Proton donor. 591–592 contributes to the substrate binding site; the sequence is KQ.

It belongs to the glycosyl hydrolase 65 family. In terms of assembly, homodimer.

The catalysed reaction is alpha,alpha-trehalose + phosphate = beta-D-glucose 1-phosphate + D-glucose. It functions in the pathway glycan degradation; trehalose degradation. Its function is as follows. Catalyzes the reversible phosphorolytic cleavage of trehalose. Phosphorolysis is specific for trehalose. This chain is Alpha,alpha-trehalose phosphorylase (treP), found in Geobacillus stearothermophilus (Bacillus stearothermophilus).